We begin with the raw amino-acid sequence, 228 residues long: Aquaporin Z (228 aa).

2 helical membrane passes run 1 to 21 (MLNK…GGCG) and 23 to 43 (AILA…ALAF). The NPA 1 motif lies at 63-65 (NPA). 3 helical membrane-spanning segments follow: residues 82 to 102 (IPYW…LYVI), 129 to 149 (MMAG…IILG), and 154 to 174 (LAPA…IHLV). An NPA 2 motif is present at residues 184-186 (NPA). The helical transmembrane segment at 205 to 225 (LFWVAPLVGAVIGAIIWKGLL) threads the bilayer.

It belongs to the MIP/aquaporin (TC 1.A.8) family. As to quaternary structure, homotetramer.

The protein localises to the cell inner membrane. It carries out the reaction H2O(in) = H2O(out). In terms of biological role, channel that permits osmotically driven movement of water in both directions. It is involved in the osmoregulation and in the maintenance of cell turgor during volume expansion in rapidly growing cells. It mediates rapid entry or exit of water in response to abrupt changes in osmolarity. The sequence is that of Aquaporin Z from Brucella melitensis biotype 1 (strain ATCC 23456 / CCUG 17765 / NCTC 10094 / 16M).